The following is a 481-amino-acid chain: Cysteine--tRNA ligase (481 aa).

Zn(2+) is bound at residue cysteine 29. Positions 31–41 match the 'HIGH' region motif; sequence VTVYDHCHIGH. The Zn(2+) site is built by cysteine 209, histidine 234, and glutamate 238. The short motif at 266-270 is the 'KMSKS' region element; it reads KMSKS. Lysine 269 lines the ATP pocket.

This sequence belongs to the class-I aminoacyl-tRNA synthetase family. As to quaternary structure, monomer. Zn(2+) serves as cofactor.

The protein resides in the cytoplasm. The catalysed reaction is tRNA(Cys) + L-cysteine + ATP = L-cysteinyl-tRNA(Cys) + AMP + diphosphate. The chain is Cysteine--tRNA ligase from Geobacter sulfurreducens (strain ATCC 51573 / DSM 12127 / PCA).